We begin with the raw amino-acid sequence, 330 residues long: MNNYFSMEAFDYDDIQLVPNKAIVKSRKECVTSVKFGNRTFKIPVVPANMESVIDEKLAVWLAQNGYYYVMHRFQPEKRADFIKMMHEKGLFASISVGIKDDEYDFIDELVEKDLIPEYTTIDVAHGHSVYVIDMIKYIKEKMPDTFLTAGNVATPEAVRELENAGADATKVGVGPGKACITKLKTGFGTGGWQLAALRMCSKVARKPLIADGGIRHNGDIAKSVRFGASMVMIGSMLAGHEESPGNVIKIDGKTYKQYWGSASEVQKGAYRNVEGKQMLVPYRGSIANTLEEMKEDLQSSISYAGGRDLESIKRVDYVIVKNTIMNGDY.

The active-site Thioimidate intermediate is Cys180. Leu209–Val232 is a binding site for NADP(+).

The protein belongs to the IMPDH/GMPR family. GuaC type 2 subfamily.

The catalysed reaction is IMP + NH4(+) + NADP(+) = GMP + NADPH + 2 H(+). In terms of biological role, catalyzes the irreversible NADPH-dependent deamination of GMP to IMP. It functions in the conversion of nucleobase, nucleoside and nucleotide derivatives of G to A nucleotides, and in maintaining the intracellular balance of A and G nucleotides. The protein is GMP reductase of Lactobacillus delbrueckii subsp. bulgaricus (strain ATCC 11842 / DSM 20081 / BCRC 10696 / JCM 1002 / NBRC 13953 / NCIMB 11778 / NCTC 12712 / WDCM 00102 / Lb 14).